Here is a 112-residue protein sequence, read N- to C-terminus: Phosphoribosyl-ATP pyrophosphatase (112 aa).

Belongs to the PRA-PH family.

Its subcellular location is the cytoplasm. The enzyme catalyses 1-(5-phospho-beta-D-ribosyl)-ATP + H2O = 1-(5-phospho-beta-D-ribosyl)-5'-AMP + diphosphate + H(+). Its pathway is amino-acid biosynthesis; L-histidine biosynthesis; L-histidine from 5-phospho-alpha-D-ribose 1-diphosphate: step 2/9. In Chromohalobacter salexigens (strain ATCC BAA-138 / DSM 3043 / CIP 106854 / NCIMB 13768 / 1H11), this protein is Phosphoribosyl-ATP pyrophosphatase.